The following is a 386-amino-acid chain: Delta(7)-sterol 5(6)-desaturase (386 aa).

A run of 3 helical transmembrane segments spans residues 119–139 (VLSL…IVAY), 172–192 (IPVM…GYSF), and 206–226 (AILW…YFLH). The region spanning 214-337 (FILFTDCGIY…FTTLWDRLGN (124 aa)) is the Fatty acid hydroxylase domain. The Histidine box-1 signature appears at 226–230 (HRWLH). Residues 239-243 (HKPHH) carry the Histidine box-2 motif. Residues 272 to 292 (PLLFPLHKVLYLLLFTFVNFW) traverse the membrane as a helical segment. Positions 314–318 (HTVHH) match the Histidine box-3 motif.

The protein belongs to the sterol desaturase family. The cofactor is Fe cation.

Its subcellular location is the endoplasmic reticulum membrane. It carries out the reaction a Delta(7)-sterol + 2 Fe(II)-[cytochrome b5] + O2 + 2 H(+) = a Delta(5),Delta(7)-sterol + 2 Fe(III)-[cytochrome b5] + 2 H2O. The protein operates within steroid metabolism; ergosterol biosynthesis; ergosterol from zymosterol: step 3/5. Catalyzes the introduction of a C-5 double bond in the B ring of ergosterol. May contribute to the regulation of ergosterol biosynthesis. The protein is Delta(7)-sterol 5(6)-desaturase (ERG3) of Candida dubliniensis (strain CD36 / ATCC MYA-646 / CBS 7987 / NCPF 3949 / NRRL Y-17841) (Yeast).